The chain runs to 362 residues: Phosphoserine aminotransferase (362 aa).

L-glutamate is bound at residue R42. Pyridoxal 5'-phosphate contacts are provided by residues 76-77 (AR), W102, T153, D174, and Q197. Residue K198 is modified to N6-(pyridoxal phosphate)lysine. 239–240 (NT) contacts pyridoxal 5'-phosphate.

The protein belongs to the class-V pyridoxal-phosphate-dependent aminotransferase family. SerC subfamily. As to quaternary structure, homodimer. Requires pyridoxal 5'-phosphate as cofactor.

The protein localises to the cytoplasm. It catalyses the reaction O-phospho-L-serine + 2-oxoglutarate = 3-phosphooxypyruvate + L-glutamate. It carries out the reaction 4-(phosphooxy)-L-threonine + 2-oxoglutarate = (R)-3-hydroxy-2-oxo-4-phosphooxybutanoate + L-glutamate. It functions in the pathway amino-acid biosynthesis; L-serine biosynthesis; L-serine from 3-phospho-D-glycerate: step 2/3. The protein operates within cofactor biosynthesis; pyridoxine 5'-phosphate biosynthesis; pyridoxine 5'-phosphate from D-erythrose 4-phosphate: step 3/5. Its function is as follows. Catalyzes the reversible conversion of 3-phosphohydroxypyruvate to phosphoserine and of 3-hydroxy-2-oxo-4-phosphonooxybutanoate to phosphohydroxythreonine. In Xenorhabdus nematophila (strain ATCC 19061 / DSM 3370 / CCUG 14189 / LMG 1036 / NCIMB 9965 / AN6), this protein is Phosphoserine aminotransferase.